We begin with the raw amino-acid sequence, 273 residues long: NADPH-dependent 7-cyano-7-deazaguanine reductase (273 aa).

81–83 (VES) is a substrate binding site. 83 to 84 (SK) lines the NADPH pocket. Residue cysteine 179 is the Thioimide intermediate of the active site. Aspartate 186 acts as the Proton donor in catalysis. 218–219 (AE) is a binding site for substrate. 247 to 248 (RG) serves as a coordination point for NADPH.

The protein belongs to the GTP cyclohydrolase I family. QueF type 2 subfamily. Homodimer.

Its subcellular location is the cytoplasm. It carries out the reaction 7-aminomethyl-7-carbaguanine + 2 NADP(+) = 7-cyano-7-deazaguanine + 2 NADPH + 3 H(+). Its pathway is tRNA modification; tRNA-queuosine biosynthesis. Catalyzes the NADPH-dependent reduction of 7-cyano-7-deazaguanine (preQ0) to 7-aminomethyl-7-deazaguanine (preQ1). This is NADPH-dependent 7-cyano-7-deazaguanine reductase from Rickettsia bellii (strain OSU 85-389).